A 374-amino-acid polypeptide reads, in one-letter code: Type IV pilus assembly protein PilC (374 aa).

A run of 3 helical transmembrane segments spans residues 138 to 158 (AMTY…ILLI), 187 to 207 (EFLQ…GFTF), and 347 to 367 (IMAV…LPIF).

It belongs to the GSP F family. As to quaternary structure, homotetramer. Interacts with PilB.

It is found in the cell inner membrane. Essential inner membrane component of the type IV pilus (T4P) that plays a role in surface and host cell adhesion, colonization, biofilm maturation, virulence, and twitching, a form of surface-associated motility facilitated by cycles of extension, adhesion, and retraction of T4P fibers. Controls both pilus assembly and disassembly and plays an important role in PilB localization to the complex and ATPase activity. This Pseudomonas aeruginosa (strain ATCC 15692 / DSM 22644 / CIP 104116 / JCM 14847 / LMG 12228 / 1C / PRS 101 / PAO1) protein is Type IV pilus assembly protein PilC (pilC).